The sequence spans 560 residues: uncharacterized protein (560 aa).

Positions 1–281 (MLWNWVALVG…LGSFFHVAMN (281 aa)) constitute an ABC transmembrane type-1 domain. The next 7 membrane-spanning stretches (helical) occupy residues 2-22 (LWNW…SYIL), 32-52 (LLSA…RAFA), 108-128 (IYFG…LTLF), 138-160 (TAII…NKIA), 168-188 (WSIY…LITL), 223-243 (VSLM…TALL), and 249-269 (QLSV…FIPL). The ABC transporter domain maps to 314–547 (VEIKDLHFSY…QGAYAEMFQQ (234 aa)). 347–354 (GKSGCGKS) serves as a coordination point for ATP.

The protein belongs to the ABC transporter superfamily.

It localises to the cell inner membrane. This is an uncharacterized protein from Haemophilus influenzae (strain ATCC 51907 / DSM 11121 / KW20 / Rd).